Here is a 325-residue protein sequence, read N- to C-terminus: Beta-ketoacyl-[acyl-carrier-protein] synthase III (325 aa).

Catalysis depends on residues Cys116 and His252. The segment at 253–257 (QANLR) is ACP-binding. The active site involves Asn282.

This sequence belongs to the thiolase-like superfamily. FabH family. As to quaternary structure, homodimer.

The protein localises to the cytoplasm. The catalysed reaction is malonyl-[ACP] + acetyl-CoA + H(+) = 3-oxobutanoyl-[ACP] + CO2 + CoA. It functions in the pathway lipid metabolism; fatty acid biosynthesis. In terms of biological role, catalyzes the condensation reaction of fatty acid synthesis by the addition to an acyl acceptor of two carbons from malonyl-ACP. Catalyzes the first condensation reaction which initiates fatty acid synthesis and may therefore play a role in governing the total rate of fatty acid production. Possesses both acetoacetyl-ACP synthase and acetyl transacylase activities. Its substrate specificity determines the biosynthesis of branched-chain and/or straight-chain of fatty acids. The protein is Beta-ketoacyl-[acyl-carrier-protein] synthase III of Xanthomonas campestris pv. campestris (strain ATCC 33913 / DSM 3586 / NCPPB 528 / LMG 568 / P 25).